Reading from the N-terminus, the 115-residue chain is ATP-dependent Clp protease adapter protein ClpS (115 aa).

It belongs to the ClpS family. In terms of assembly, binds to the N-terminal domain of the chaperone ClpA.

Involved in the modulation of the specificity of the ClpAP-mediated ATP-dependent protein degradation. The protein is ATP-dependent Clp protease adapter protein ClpS of Leptothrix cholodnii (strain ATCC 51168 / LMG 8142 / SP-6) (Leptothrix discophora (strain SP-6)).